The primary structure comprises 638 residues: DNA mismatch repair protein MutL (638 aa).

The segment at 404 to 433 (FGTQTNAFGSMATPRDNSRGNYSAGESRQR) is disordered.

The protein belongs to the DNA mismatch repair MutL/HexB family.

Functionally, this protein is involved in the repair of mismatches in DNA. It is required for dam-dependent methyl-directed DNA mismatch repair. May act as a 'molecular matchmaker', a protein that promotes the formation of a stable complex between two or more DNA-binding proteins in an ATP-dependent manner without itself being part of a final effector complex. This is DNA mismatch repair protein MutL from Shewanella baltica (strain OS195).